A 406-amino-acid polypeptide reads, in one-letter code: Fructose-1,6-bisphosphatase, chloroplastic (406 aa).

The transit peptide at 1–47 (MAAAATTSSHLLLLSRQQAAASLQCGLSFRRQPGRLAGGSSAPSVRC) directs the protein to the chloroplast. The Mg(2+) site is built by E128, E157, D178, L180, and D181. 181–184 (DGSS) contributes to the substrate binding site. Residues C222 and C227 are joined by a disulfide bond. Residues N286, Y318, Y336, Y338, and K348 each contribute to the substrate site. E354 contributes to the Mg(2+) binding site.

The protein belongs to the FBPase class 1 family. As to quaternary structure, homotetramer. The cofactor is Mg(2+).

The protein resides in the plastid. It is found in the chloroplast stroma. It catalyses the reaction beta-D-fructose 1,6-bisphosphate + H2O = beta-D-fructose 6-phosphate + phosphate. Its pathway is carbohydrate biosynthesis; Calvin cycle. Inhibited by sodium chloride. In terms of biological role, catalyzes the irreversible reaction from fructose-1,6-bisphosphate to fructose-6-phosphate and inorganic phosphate, to regenerate the primary CO(2) acceptor molecule, ribulose-1,5-bisphosphate. Involved in the regulation of photosynthetic performance and sucrose synthesis. The polypeptide is Fructose-1,6-bisphosphatase, chloroplastic (Oryza sativa subsp. indica (Rice)).